Reading from the N-terminus, the 67-residue chain is Large ribosomal subunit protein bL32 (67 aa).

The span at 1–20 shows a compositional bias: basic residues; it reads MAVPKRKMSRSNTRARRAKW. A disordered region spans residues 1–24; that stretch reads MAVPKRKMSRSNTRARRAKWKATA.

This sequence belongs to the bacterial ribosomal protein bL32 family.

This chain is Large ribosomal subunit protein bL32, found in Renibacterium salmoninarum (strain ATCC 33209 / DSM 20767 / JCM 11484 / NBRC 15589 / NCIMB 2235).